The following is a 797-amino-acid chain: Short transient receptor potential channel 4-associated protein (797 aa).

Ala-2 carries the post-translational modification N-acetylalanine. The interval Ala-2–Met-400 is interaction with TNFRSF1A.

Component of the DCX(TRPC4AP) E3 ubiquitin ligase complex, at least composed of CUL4A, DDB1, TRPC4AP/TRUSS and RBX1. Interacts with MYC. Constitutively associated with TNFRSF1A. Directly interacts with TRADD, TRAF2, CHUK, IKBKB and IKBKG. Interacts with TRPC1, TRPC4 and TRPC5. As to quaternary structure, (Microbial infection) Interacts with Hepatitis B virus (HBV) protein X; leading to prevent ubiquitination of TRPC4AP by SKP2. Post-translationally, phosphorylated by GSK3B; phosphorylation is required for ubiquitination. In terms of processing, ubiquitinated by a SCF (SKP1-CUL1-F-box protein) E3 ubiquitin-protein ligase containing SKP2, leading to its degradation. Phosphorylation by GSK3B is required for ubiquitination.

The protein resides in the cytoplasm. Its subcellular location is the perinuclear region. It participates in protein modification; protein ubiquitination. Its function is as follows. Substrate-recognition component of a DCX (DDB1-CUL4-X-box) E3 ubiquitin-protein ligase complex required for cell cycle control. The DCX(TRPC4AP) complex specifically mediates the polyubiquitination and subsequent degradation of MYC as part of the DesCEND (destruction via C-end degrons) pathway. The DesCEND (destruction via C-end degrons) pathway recognizes a C-degron located at the extreme C terminus of target proteins, leading to their ubiquitination and degradation. The DCX(TRPC4AP) complex specifically recognizes proteins with an arginine at the minus 3 position (R-3 motif) at the C-terminus, such as MYC, leading to their ubiquitination and degradation. Also participates in the activation of NFKB1 in response to ligation of TNFRSF1A, possibly by linking TNFRSF1A to the IKK signalosome. Involved in JNK activation via its interaction with TRAF2. Also involved in elevation of endoplasmic reticulum Ca(2+) storage reduction in response to CHRM1. This Homo sapiens (Human) protein is Short transient receptor potential channel 4-associated protein.